The sequence spans 244 residues: MSDSSDTTVDGASDGASDGASGADNRAQLVDTALTERQRTILNVIRTSVNDRGYPPSIREIGDAVGLTSTSSVAHQLRTLERKGYLRRDPNRPRAVDVRGADDTVTAAPVTDVAGSDALPEPTFVPVLGRIAAGGPILAEEAVEDVFPLPRELVGQGTLFLLKVVGESMIEAAICDGDWVVVRQQNVADNGDIVAAMIDGEATVKTFKRAGGQIWLMPHNPAFDPIPGNDATVLGKVVTVIRKI.

The interval 1-24 is disordered; the sequence is MSDSSDTTVDGASDGASDGASGAD. The segment covering 10-24 has biased composition (low complexity); it reads DGASDGASDGASGAD. Positions 58–78 form a DNA-binding region, H-T-H motif; that stretch reads IREIGDAVGLTSTSSVAHQLR. Active-site for autocatalytic cleavage activity residues include Ser168 and Lys205.

It belongs to the peptidase S24 family. In terms of assembly, homodimer.

It catalyses the reaction Hydrolysis of Ala-|-Gly bond in repressor LexA.. Its function is as follows. Represses a number of genes involved in the response to DNA damage (SOS response), including recA and lexA. In the presence of single-stranded DNA, RecA interacts with LexA causing an autocatalytic cleavage which disrupts the DNA-binding part of LexA, leading to derepression of the SOS regulon and eventually DNA repair. The sequence is that of LexA repressor from Mycobacterium marinum (strain ATCC BAA-535 / M).